The sequence spans 217 residues: MPRFQLSNSTSVPNHNYEWSYEYYDDEEPVSFEGLKAHRYSIVIGFWVGLAVFVIFMFFVLTLLTKTGAPHPEAAEPYEKRMRLTSCADGLGRQRETDGRTGLSRPLLEESRSLFHCYINEEEREGGRAATDAGALTHGRSGIGNSRGQVEEVGLVVQNMVLESRAEREAALLAHFNIPNFVNSELNSALGDEDLLLGDPPIIMEEARPRCTHHIID.

Asn-8 carries an N-linked (GlcNAc...) asparagine glycan. The chain crosses the membrane as a helical span at residues 42–62 (IVIGFWVGLAVFVIFMFFVLT).

It belongs to the MRAP family. In terms of assembly, interacts with mc4r.

It localises to the cell membrane. It is found in the endoplasmic reticulum membrane. In terms of biological role, inhibitor of melanocortin receptor 4 (mc4r), a receptor involved in energy homeostasis. Plays a role during larval development in the control of energy homeostasis and body weight regulation by decreasing ligand-sensitivity of mc4r and mc4r-mediated generation of cAMP, leading to stimulate growth during larval development. Acts by stabilizing an inactive conformation of mc4r during embryonic development, when all the energy consumed is obtained from the yolk sac, possibly to speed the rapid maturation to the mobile free-feeding juvenile stage reached at 5 dpf. This Danio rerio (Zebrafish) protein is Melanocortin-2 receptor accessory protein 2A (mrap2a).